Consider the following 161-residue polypeptide: N5-carboxyaminoimidazole ribonucleotide mutase (161 aa).

Positions 9, 12, and 39 each coordinate substrate.

The protein belongs to the AIR carboxylase family. Class I subfamily.

The catalysed reaction is 5-carboxyamino-1-(5-phospho-D-ribosyl)imidazole + H(+) = 5-amino-1-(5-phospho-D-ribosyl)imidazole-4-carboxylate. It functions in the pathway purine metabolism; IMP biosynthesis via de novo pathway; 5-amino-1-(5-phospho-D-ribosyl)imidazole-4-carboxylate from 5-amino-1-(5-phospho-D-ribosyl)imidazole (N5-CAIR route): step 2/2. Its function is as follows. Catalyzes the conversion of N5-carboxyaminoimidazole ribonucleotide (N5-CAIR) to 4-carboxy-5-aminoimidazole ribonucleotide (CAIR). This Vibrio vulnificus (strain CMCP6) protein is N5-carboxyaminoimidazole ribonucleotide mutase.